A 379-amino-acid polypeptide reads, in one-letter code: Cytochrome b (379 aa).

4 helical membrane passes run 33–53 (FGSL…FLAM), 77–98 (WLIR…FIHV), 113–133 (WNIG…GYVL), and 178–198 (FFAF…VHLL). Heme b is bound by residues His83 and His97. Residues His182 and His196 each contribute to the heme b site. His201 contacts a ubiquinone. 4 helical membrane-spanning segments follow: residues 226–246 (TKDL…ALFF), 288–308 (LGGV…PLLN), 320–340 (VTQV…WIGG), and 347–367 (FTTI…ILIP).

The protein belongs to the cytochrome b family. In terms of assembly, the cytochrome bc1 complex contains 11 subunits: 3 respiratory subunits (MT-CYB, CYC1 and UQCRFS1), 2 core proteins (UQCRC1 and UQCRC2) and 6 low-molecular weight proteins (UQCRH/QCR6, UQCRB/QCR7, UQCRQ/QCR8, UQCR10/QCR9, UQCR11/QCR10 and a cleavage product of UQCRFS1). This cytochrome bc1 complex then forms a dimer. Heme b is required as a cofactor.

The protein resides in the mitochondrion inner membrane. In terms of biological role, component of the ubiquinol-cytochrome c reductase complex (complex III or cytochrome b-c1 complex) that is part of the mitochondrial respiratory chain. The b-c1 complex mediates electron transfer from ubiquinol to cytochrome c. Contributes to the generation of a proton gradient across the mitochondrial membrane that is then used for ATP synthesis. This is Cytochrome b (MT-CYB) from Akodon mystax (Caparao grass mouse).